The sequence spans 173 residues: Large ribosomal subunit protein uL10 (173 aa).

This sequence belongs to the universal ribosomal protein uL10 family. In terms of assembly, part of the ribosomal stalk of the 50S ribosomal subunit. The N-terminus interacts with L11 and the large rRNA to form the base of the stalk. The C-terminus forms an elongated spine to which L12 dimers bind in a sequential fashion forming a multimeric L10(L12)X complex.

Forms part of the ribosomal stalk, playing a central role in the interaction of the ribosome with GTP-bound translation factors. The chain is Large ribosomal subunit protein uL10 from Desulfatibacillum aliphaticivorans.